The primary structure comprises 38 residues: Large ribosomal subunit protein bL36 (38 aa).

The protein belongs to the bacterial ribosomal protein bL36 family.

This chain is Large ribosomal subunit protein bL36, found in Pseudomonas entomophila (strain L48).